The chain runs to 459 residues: Flavin-containing monooxygenase FMO GS-OX1 (459 aa).

17–22 is a binding site for FAD; sequence GAGAAG. 211-216 lines the NADP(+) pocket; it reads GNYASG.

It belongs to the FMO family. It depends on FAD as a cofactor. In terms of tissue distribution, mainly expressed in leaves. Low levels in flowers and seeds.

The enzyme catalyses a (Z)-omega-(methylsulfanyl)-N-sulfo-alkylhydroximate S-glucoside + NADPH + O2 + H(+) = a (Z)-omega-(methylsulfinyl)-alkyl-glucosinolate + NADP(+) + H2O. Catalyzes the conversion of methylthioalkyl glucosinolates into methylsulfinylalkyl glucosinolates. Able to S-oxygenate both desulfo- and intact 4-methylthiobutyl glucosinolates, but no activity with methionine, dihomomethionine or 5-methylthiopentaldoxime. This Arabidopsis thaliana (Mouse-ear cress) protein is Flavin-containing monooxygenase FMO GS-OX1 (FMOGS-OX1).